A 573-amino-acid polypeptide reads, in one-letter code: Thiol:disulfide interchange protein DsbD (573 aa).

The signal sequence occupies residues 1-20 (MLKRFFLLLSSLLLVCNVQA). At 21-175 (GLFNNKPQYL…AENLSNNYLS (155 aa)) the chain is on the periplasmic side. 2 cysteine pairs are disulfide-bonded: Cys-121–Cys-126 and Cys-191–Cys-313. Residues 176-196 (IFGFLLLGIGLAFTPCVLPML) form a helical membrane-spanning segment. Residues 197–227 (PLLSAIVIGHKNRPNTSRALLLSFTYVQGMA) lie on the Cytoplasmic side of the membrane. The helical transmembrane segment at 228–248 (LTYTLLGLTVAAIGLPFQVAL) threads the bilayer. At 249–251 (QSP) the chain is on the periplasmic side. A helical membrane pass occupies residues 252 to 272 (AVLISLAVLFTLLAASMFGLF). Residues 273-292 (EIRLPNTWQQKLNALSQQQQ) lie on the Cytoplasmic side of the membrane. A helical transmembrane segment spans residues 293 to 313 (GGAVGNVFIMGIIAGLVASPC). Topologically, residues 314–331 (TSAPLSGALLYVAQSGNL) are periplasmic. The chain crosses the membrane as a helical span at residues 332–352 (LIGGLALYLLALGMGLPLILI). Topologically, residues 353 to 365 (TVFGNQILPKSGE) are cytoplasmic. Residues 366–386 (WLFKVKTAFGFVMLALPIFLI) traverse the membrane as a helical segment. At 387–393 (SRILPSH) the chain is on the periplasmic side. A helical transmembrane segment spans residues 394–414 (YEPFLWSTLALAFLGWLISSL). Residues 415–425 (NYSTMLKQAVR) are Cytoplasmic-facing. The helical transmembrane segment at 426-446 (ILLFIAFGLTAYPWANLVWQT) threads the bilayer. In terms of domain architecture, Thioredoxin spans 440 to 573 (ANLVWQTTSN…NQFLAWLNRL (134 aa)). The Periplasmic portion of the chain corresponds to 447–573 (TSNTAQPTTP…NQFLAWLNRL (127 aa)). Cysteines 490 and 493 form a disulfide.

It belongs to the thioredoxin family. DsbD subfamily.

It is found in the cell inner membrane. It carries out the reaction [protein]-dithiol + NAD(+) = [protein]-disulfide + NADH + H(+). It catalyses the reaction [protein]-dithiol + NADP(+) = [protein]-disulfide + NADPH + H(+). Its function is as follows. Required to facilitate the formation of correct disulfide bonds in some periplasmic proteins and for the assembly of the periplasmic c-type cytochromes. Acts by transferring electrons from cytoplasmic thioredoxin to the periplasm. This transfer involves a cascade of disulfide bond formation and reduction steps. The protein is Thiol:disulfide interchange protein DsbD of Haemophilus ducreyi (strain 35000HP / ATCC 700724).